A 61-amino-acid polypeptide reads, in one-letter code: uncharacterized protein (61 aa).

The Extracellular portion of the chain corresponds to 1-20 (MSSTTSTINLSSLGSAINDV). The chain crosses the membrane as a helical span at residues 21–41 (LNIIVQYLPVFVTVAVLFGII). At 42-61 (TYMTGGLGGLFSGITGIFGS) the chain is on the cytoplasmic side.

Its subcellular location is the host membrane. This is an uncharacterized protein from Acidianus filamentous virus 2 (isolate Italy/Pozzuoli) (AFV-2).